A 429-amino-acid polypeptide reads, in one-letter code: BURP domain-containing protein 3 (429 aa).

The signal sequence occupies residues 1-21 (MDRLLACLLGFLLIASVGSHA). Residues 59–81 (GGGVHVDAGHGKPGGTTVDVGKG) are disordered. The region spanning 213–428 (FFLEKDLHPG…PQDHVVWTRS (216 aa)) is the BURP domain.

In terms of tissue distribution, expressed in stems, leaves, shoot, panicles and stamen.

The polypeptide is BURP domain-containing protein 3 (BURP3) (Oryza sativa subsp. japonica (Rice)).